The chain runs to 370 residues: 3-dehydroquinate synthase (370 aa).

Residues 108 to 112 (GVIGD), 132 to 133 (TT), Lys145, and Lys154 contribute to the NAD(+) site. 3 residues coordinate Zn(2+): Glu187, His249, and His267.

Belongs to the sugar phosphate cyclases superfamily. Dehydroquinate synthase family. Co(2+) serves as cofactor. The cofactor is Zn(2+). NAD(+) is required as a cofactor.

It is found in the cytoplasm. It carries out the reaction 7-phospho-2-dehydro-3-deoxy-D-arabino-heptonate = 3-dehydroquinate + phosphate. It functions in the pathway metabolic intermediate biosynthesis; chorismate biosynthesis; chorismate from D-erythrose 4-phosphate and phosphoenolpyruvate: step 2/7. Functionally, catalyzes the conversion of 3-deoxy-D-arabino-heptulosonate 7-phosphate (DAHP) to dehydroquinate (DHQ). This is 3-dehydroquinate synthase from Cereibacter sphaeroides (strain ATCC 17029 / ATH 2.4.9) (Rhodobacter sphaeroides).